Reading from the N-terminus, the 95-residue chain is UPF0473 protein CD630_12860 (95 aa).

Belongs to the UPF0473 family.

The sequence is that of UPF0473 protein CD630_12860 from Clostridioides difficile (strain 630) (Peptoclostridium difficile).